A 427-amino-acid chain; its full sequence is 3-phosphoshikimate 1-carboxyvinyltransferase (427 aa).

Residues K22, S23, and R27 each coordinate 3-phosphoshikimate. K22 is a binding site for phosphoenolpyruvate. 2 residues coordinate phosphoenolpyruvate: G96 and R124. 7 residues coordinate 3-phosphoshikimate: S169, S170, Q171, S197, D313, N336, and K340. Q171 contributes to the phosphoenolpyruvate binding site. D313 (proton acceptor) is an active-site residue. R344, R386, and K411 together coordinate phosphoenolpyruvate.

This sequence belongs to the EPSP synthase family. Monomer.

The protein resides in the cytoplasm. It catalyses the reaction 3-phosphoshikimate + phosphoenolpyruvate = 5-O-(1-carboxyvinyl)-3-phosphoshikimate + phosphate. It functions in the pathway metabolic intermediate biosynthesis; chorismate biosynthesis; chorismate from D-erythrose 4-phosphate and phosphoenolpyruvate: step 6/7. Functionally, catalyzes the transfer of the enolpyruvyl moiety of phosphoenolpyruvate (PEP) to the 5-hydroxyl of shikimate-3-phosphate (S3P) to produce enolpyruvyl shikimate-3-phosphate and inorganic phosphate. The sequence is that of 3-phosphoshikimate 1-carboxyvinyltransferase from Salmonella choleraesuis (strain SC-B67).